Reading from the N-terminus, the 417-residue chain is DNA primase DnaG (417 aa).

The Toprim domain occupies 171-257; the sequence is DAIIIVEGRA…SVEDMARKEI (87 aa). The Mg(2+) site is built by E177, D219, and D221. A disordered region spans residues 278–325; that stretch reads VPGEKRTQDLRPQKPGASEQNSIKKENVENENESTPTSFEPISEPAPP. The span at 279 to 289 shows a compositional bias: basic and acidic residues; sequence PGEKRTQDLRP.

The protein belongs to the archaeal DnaG primase family. Forms a ternary complex with MCM helicase and DNA. It depends on Mg(2+) as a cofactor.

The enzyme catalyses ssDNA + n NTP = ssDNA/pppN(pN)n-1 hybrid + (n-1) diphosphate.. Functionally, RNA polymerase that catalyzes the synthesis of short RNA molecules used as primers for DNA polymerase during DNA replication. The sequence is that of DNA primase DnaG from Methanosphaerula palustris (strain ATCC BAA-1556 / DSM 19958 / E1-9c).